We begin with the raw amino-acid sequence, 429 residues long: Protein phosphatase 2C homolog 2 (429 aa).

One can recognise a PPM-type phosphatase domain in the interval 16–291; the sequence is LYGLSAMQGW…DNMTMIIIGL (276 aa). Mn(2+) is bound by residues Asp-64, Gly-65, Asp-233, and Asp-282. Disordered stretches follow at residues 320 to 348 and 384 to 429; these read YGKS…NDRS and RDVT…SASS. The span at 384 to 397 shows a compositional bias: basic and acidic residues; the sequence is RDVTNHLQHDKAEE. Low complexity predominate over residues 405–419; that stretch reads SESPSSANKNSSGSG.

This sequence belongs to the PP2C family. Requires Mg(2+) as cofactor. Mn(2+) serves as cofactor.

It localises to the cytoplasm. The protein resides in the nucleus. It catalyses the reaction O-phospho-L-seryl-[protein] + H2O = L-seryl-[protein] + phosphate. It carries out the reaction O-phospho-L-threonyl-[protein] + H2O = L-threonyl-[protein] + phosphate. In terms of biological role, dephosphorylating regulator for many key proteins. Dephosphorylates sakA, to negatively regulate the stress-activated p38MAPK cascade. The chain is Protein phosphatase 2C homolog 2 from Aspergillus fumigatus (strain ATCC MYA-4609 / CBS 101355 / FGSC A1100 / Af293) (Neosartorya fumigata).